The sequence spans 460 residues: ATP synthase subunit beta (460 aa).

Position 150–157 (150–157 (GGAGVGKT)) interacts with ATP.

It belongs to the ATPase alpha/beta chains family. F-type ATPases have 2 components, CF(1) - the catalytic core - and CF(0) - the membrane proton channel. CF(1) has five subunits: alpha(3), beta(3), gamma(1), delta(1), epsilon(1). CF(0) has three main subunits: a(1), b(2) and c(9-12). The alpha and beta chains form an alternating ring which encloses part of the gamma chain. CF(1) is attached to CF(0) by a central stalk formed by the gamma and epsilon chains, while a peripheral stalk is formed by the delta and b chains.

The protein localises to the cell inner membrane. The enzyme catalyses ATP + H2O + 4 H(+)(in) = ADP + phosphate + 5 H(+)(out). In terms of biological role, produces ATP from ADP in the presence of a proton gradient across the membrane. The catalytic sites are hosted primarily by the beta subunits. The polypeptide is ATP synthase subunit beta (Photorhabdus laumondii subsp. laumondii (strain DSM 15139 / CIP 105565 / TT01) (Photorhabdus luminescens subsp. laumondii)).